Consider the following 134-residue polypeptide: MSWQTYVDDHLMCDIEGHEGHRLTAAAIVGHDGSVWAQSATFPQFKPEEMNGIMTDFNEPGHLAPTGLHLGGTKYMVIQGEAGAVIRGKKGSGGITIKKTGQALVFGIYEEPVTPGQCNMVVEGLGDYLLEQGL.

The cysteines at positions 13 and 118 are disulfide-linked. An Involved in PIP2 interaction motif is present at residues 84–100 (AVIRGKKGSGGITIKKT). Phosphothreonine is present on Thr-114.

It belongs to the profilin family. As to quaternary structure, occurs in many kinds of cells as a complex with monomeric actin in a 1:1 ratio. Phosphorylated by MAP kinases.

The protein localises to the cytoplasm. It is found in the cytoskeleton. Its function is as follows. Binds to actin and affects the structure of the cytoskeleton. At high concentrations, profilin prevents the polymerization of actin, whereas it enhances it at low concentrations. The protein is Profilin-2 of Olea europaea (Common olive).